The primary structure comprises 201 residues: MARYTGPVTRKSRRLGVDLVGGSSAYEKRPYPPGQHGRARIKESEYRQQLQEKQKARFTYGVMEKQFRRYYAEAVRSSGKTGEQLLQILESRLDNVVYRAGLARTRRMARQLVSHGHFTVNNVKVDVPSYRVSQYDIIDIKPKSLNTLPFEVARETAGERPIPGWLQVVGERQRILVHQLPERAQIDVPLAEQLIVEFYSK.

A disordered region spans residues 19–41; that stretch reads LVGGSSAYEKRPYPPGQHGRARI. One can recognise an S4 RNA-binding domain in the interval 91-157; the sequence is SRLDNVVYRA…LPFEVARETA (67 aa).

This sequence belongs to the universal ribosomal protein uS4 family. As to quaternary structure, part of the 30S ribosomal subunit. Contacts protein S5. The interaction surface between S4 and S5 is involved in control of translational fidelity.

In terms of biological role, one of the primary rRNA binding proteins, it binds directly to 16S rRNA where it nucleates assembly of the body of the 30S subunit. Its function is as follows. With S5 and S12 plays an important role in translational accuracy. This is Small ribosomal subunit protein uS4 from Mycobacteroides abscessus (strain ATCC 19977 / DSM 44196 / CCUG 20993 / CIP 104536 / JCM 13569 / NCTC 13031 / TMC 1543 / L948) (Mycobacterium abscessus).